The primary structure comprises 73 residues: Mitofissin (73 aa).

The protein belongs to the ?ATG44? family. As to quaternary structure, homooligomer. Found as homooctamer in solution, but binds to membranes either as a monomer, dimer, or tetramer, not as an octamer.

Its subcellular location is the mitochondrion intermembrane space. It localises to the vacuole. In terms of biological role, mitochondrial fission factor that acts directly on lipid membranes to drive mitochondrial fission required for mitophagy. Directly binds to lipid membranes and brings about lipid membrane fragility to facilitate membrane fission and engulfment of mitochondria by the phagophore. The sequence is that of Mitofissin from Saccharomyces cerevisiae (strain ATCC 204508 / S288c) (Baker's yeast).